The following is a 124-amino-acid chain: Small ribosomal subunit protein bS6 (124 aa).

Residues 96 to 124 (ETAPSPMMKEVQREEARKAAQTTTEGQAA) are disordered. The span at 115-124 (AQTTTEGQAA) shows a compositional bias: polar residues.

It belongs to the bacterial ribosomal protein bS6 family.

Functionally, binds together with bS18 to 16S ribosomal RNA. The polypeptide is Small ribosomal subunit protein bS6 (Cupriavidus necator (strain ATCC 17699 / DSM 428 / KCTC 22496 / NCIMB 10442 / H16 / Stanier 337) (Ralstonia eutropha)).